Consider the following 394-residue polypeptide: Enoyl-CoA delta isomerase 2 (394 aa).

The N-terminal 38 residues, Met-1–Ala-38, are a transit peptide targeting the mitochondrion. One can recognise an ACB domain in the interval Ser-39–Ser-124. The residue at position 51 (Lys-51) is an N6-acetyllysine; alternate. Lys-51 is modified (N6-succinyllysine; alternate). Lys-55 is subject to N6-succinyllysine. An N6-acetyllysine; alternate modification is found at Lys-62. Lys-62 carries the N6-succinyllysine; alternate modification. Tyr-66–Lys-70 lines the an acyl-CoA pocket. 3 positions are modified to N6-succinyllysine: Lys-70, Lys-81, and Lys-90. Residue Lys-92 is modified to N6-acetyllysine; alternate. Lys-92 carries the N6-succinyllysine; alternate modification. Lys-92 lines the an acyl-CoA pocket. A Phosphoserine modification is found at Ser-101. Tyr-111 is a binding site for an acyl-CoA. Ser-119 is modified (phosphoserine). The segment at Thr-151–Pro-322 is ECH-like. Residue Lys-161 is modified to N6-succinyllysine. Residue Ser-198–Leu-202 coordinates substrate. Lys-289 is subject to N6-succinyllysine. The Microbody targeting signal signature appears at Ser-392 to Leu-394.

The protein in the C-terminal section; belongs to the enoyl-CoA hydratase/isomerase family. Abundant in heart, skeletal muscle and liver. Expressed in CD34(+) T-cells and CD34(+) bone marrow cells.

It localises to the mitochondrion. It is found in the peroxisome matrix. It catalyses the reaction a (3Z)-enoyl-CoA = a 4-saturated (2E)-enoyl-CoA. It carries out the reaction (3Z)-octenoyl-CoA = (2E)-octenoyl-CoA. The catalysed reaction is a (3E)-enoyl-CoA = a 4-saturated (2E)-enoyl-CoA. The enzyme catalyses (2E)-tetradecenoyl-CoA = (3Z)-tetradecenoyl-CoA. It catalyses the reaction (3E)-tetradecenoyl-CoA = (2E)-tetradecenoyl-CoA. It carries out the reaction (3E)-octenoyl-CoA = (2E)-octenoyl-CoA. The catalysed reaction is (3E)-nonenoyl-CoA = (2E)-nonenoyl-CoA. The protein operates within lipid metabolism; fatty acid beta-oxidation. Able to isomerize both 3-cis and 3-trans double bonds into the 2-trans form in a range of enoyl-CoA species. Has a preference for 3-trans substrates. This chain is Enoyl-CoA delta isomerase 2 (ECI2), found in Homo sapiens (Human).